The chain runs to 80 residues: uncharacterized protein (80 aa).

The protein belongs to the BolA/IbaG family.

This is an uncharacterized protein from Buchnera aphidicola subsp. Acyrthosiphon pisum (strain APS) (Acyrthosiphon pisum symbiotic bacterium).